Reading from the N-terminus, the 104-residue chain is Large ribosomal subunit protein bL21 (104 aa).

This sequence belongs to the bacterial ribosomal protein bL21 family. As to quaternary structure, part of the 50S ribosomal subunit. Contacts protein L20.

Functionally, this protein binds to 23S rRNA in the presence of protein L20. The protein is Large ribosomal subunit protein bL21 of Francisella tularensis subsp. holarctica (strain FTNF002-00 / FTA).